The sequence spans 888 residues: DNA mismatch repair protein MutS (888 aa).

641–648 (GPNMAGKS) lines the ATP pocket.

This sequence belongs to the DNA mismatch repair MutS family.

Functionally, this protein is involved in the repair of mismatches in DNA. It is possible that it carries out the mismatch recognition step. This protein has a weak ATPase activity. The protein is DNA mismatch repair protein MutS of Rickettsia bellii (strain OSU 85-389).